Reading from the N-terminus, the 569-residue chain is Protein angel homolog 2 (569 aa).

Disordered stretches follow at residues 1–22 (MRKGRHMPRHTNANYARPGVSP), 63–92 (LQHPSSSFSTVRHPFNRPPRPPDPYQWSSW), and 109–155 (GLME…WLRN). Over residues 63 to 72 (LQHPSSSFST) the composition is skewed to polar residues. A compositionally biased stretch (low complexity) spans 139 to 150 (PPKGSRSPKGSP).

The protein belongs to the CCR4/nocturin family.

In Danio rerio (Zebrafish), this protein is Protein angel homolog 2 (angel2).